The following is a 579-amino-acid chain: Adenine deaminase (579 aa).

This sequence belongs to the metallo-dependent hydrolases superfamily. Adenine deaminase family. It depends on Mn(2+) as a cofactor.

The enzyme catalyses adenine + H2O + H(+) = hypoxanthine + NH4(+). This chain is Adenine deaminase, found in Listeria innocua serovar 6a (strain ATCC BAA-680 / CLIP 11262).